We begin with the raw amino-acid sequence, 587 residues long: MKEFKVTTGPLPGSEKIYVEGERFPFLRVPMRRIRMSDTILENGEREKNEDVVVYDTSGPYTDTSYEVNLHRGVPKIREQWIEDRGDTVRLEGLSSEYGRIRQSDASLEKLRYEHVCTRPRAAKDGCATQLYYARQGIVTPEMEFVAIRENQLIDQVRTRYRAEEGEPLGAVIPRKITPEFVRDEIAAGRAILPANINHPESEPMIIGRNFLVKINANIGNSPISSTIEEEVEKAVWAIRWGADTVMDLSTGDHIHETREWIIRNSPVPIGTVPLYQTLEKVQGDVTKLNWEIFRDTLIEQAEQGVDYFTIHAGLRWHHVPLTLRRLTGIVSRGGSIIANWCTTHKRESFIYEHFEEICQILARYDVAISLGDGLRPGCIHDANDAAQIAELKTLGELTEIAWKYNVQTIIEGPGHVPMHKIRENMEIQLEACHGAPFYTLGPLVSDVASGYDHITSAIGAAQIGWFGTAMLCYVTQKEHLGLPNREDVREGVVTYRLAAHAADLAKGHPTAYWRDYMMSKARFEFRWKDQFHLSLDPEKAIQFHDATLPDEGHKEAHFCSMCGEHFCSMRANKNFRKLLNEEAVSK.

Substrate contacts are provided by residues N218, M247, Y276, H312, 332–334 (SRG), 373–376 (DGLR), and E412. A Zn(2+)-binding site is contributed by H416. Y439 contacts substrate. Residue H480 coordinates Zn(2+). [4Fe-4S] cluster is bound by residues C560, C563, and C568.

It belongs to the ThiC family. The cofactor is [4Fe-4S] cluster.

It catalyses the reaction 5-amino-1-(5-phospho-beta-D-ribosyl)imidazole + S-adenosyl-L-methionine = 4-amino-2-methyl-5-(phosphooxymethyl)pyrimidine + CO + 5'-deoxyadenosine + formate + L-methionine + 3 H(+). It functions in the pathway cofactor biosynthesis; thiamine diphosphate biosynthesis. Catalyzes the synthesis of the hydroxymethylpyrimidine phosphate (HMP-P) moiety of thiamine from aminoimidazole ribotide (AIR) in a radical S-adenosyl-L-methionine (SAM)-dependent reaction. The sequence is that of Phosphomethylpyrimidine synthase from Porphyromonas gingivalis (strain ATCC BAA-308 / W83).